We begin with the raw amino-acid sequence, 196 residues long: Calcium channel flower (196 aa).

Transmembrane regions (helical) follow at residues 36-56 (LGIVAAFFAILFGLWNVLSII), 67-89 (IIQMLAGFVVMALEAPCCFICIE), and 114-134 (AVPPIFMCFGLASLFGSGLIF).

It belongs to the calcium channel flower family. As to quaternary structure, homomultimer. Associates with the dally/ magu complex.

It localises to the cell membrane. The protein localises to the cytoplasmic vesicle. It is found in the secretory vesicle. The protein resides in the synaptic vesicle membrane. Its subcellular location is the presynaptic cell membrane. It localises to the endosome. Its activity is regulated as follows. Channel activity is inhibited by La(3+), which reduces Ca(2+) influx and thus inhibits it's function in promoting activity-dependent bulk endocytosis (ADBE) in response to high stimuli. Functionally, transmembrane protein which mediates synaptic endocytosis, fitness-based cell culling, neuronal culling, morphogen gradient scaling, and calcium transport. Regulates synaptic endocytosis and hence couples exo- with endocytosis. Controls two major modes of synaptic vesicle (SV) endocytosis in the synaptic boutons of neuromuscular junctions (NMJs); Ca(2+) channel-independent Clathrin-mediated endocytosis (CME) in response to mild stimulation, and Ca(2+) channel-dependent activity-dependent bulk endocytosis (ADBE) in response to strong stimulation. Functions in ADBE and subsequent SV reformation from bulk endosomes by initiating Ca(2+) channel-dependent phosphatidylinositol 4,5-bisphosphate (PtdIns(4,5)P2) compartmentalization in synaptic boutons. There it acts at the periactive zone to provide the low Ca(2+) levels required to initiate Calcineurin activation and upregulate PtdIns(4,5)P2. Conversely PtdIns(4,5)P2 enhances fwe Ca(2+) channel-activity, establishing a positive feedback loop that induces PtdIns(4,5)P2 microdomain at the periactive zone. These microdomains trigger bulk membrane invagination (i.e. ADBE) by triggering actin polymerization while also promoting localization of fwe to bulk endosomes, thereby removing the ADBE trigger to reduce endocytosis and prevent excess membrane uptake. PtdIns(4,5)P2 then promotes SV reformation from the bulk endosomes, to coordinate ADBE and subsequent SV reformation. Different combinations of the flower isoforms at the cell membrane are also required for the identification and elimination of suboptimal or supernumerary cells during development, regeneration, and adulthood. Required for the recognition and elimination of unfit cells in the developing wing during cell competition. In the developing pupal retina, mediates the elimination of unwanted postmitotic neurons, including supernumerary photoreceptor neurons that form at the periphery of the retina and are contained within incomplete ommatidia units. Also required for efficient elimination and replacement of old neurons by newly generated neurons during regeneration in the adult brain following mechanical injury. Downstream of the flower fitness fingerprints, cells identified as unwanted or unfit are eliminated via apoptosis through the expression of ahuizotl (azot). However, the cells marked for elimination by the flower isoforms only undergo apoptosis if additional thresholds are met; (1) their neighboring fit/healthy cells express different levels of the fwe isoforms, and (2) the levels of the protective signal SPARC expressed by the loser or unwanted cells are unable to inhibit caspase activation. These additional thresholds for flower-mediated apoptosis, allows useful cells to recover from transient and limited stress before they are unnecessarily eliminated. Functions with dally and magu in a mechanism of scaling, which utilises apoptosis to ensure that the dpp morphogen gradient, which mediates organ growth, remains proportional to the size of the growing wing. In this mechanism, fwe represses dally- and Magu-dependent activity in expanding the gradient, and dally/Magu inhibits fwe-dependent apoptosis to keep cell death rate low. When the levels of these different proteins are optimally regulated the gradient correctly scales with organ growth but when this fails, fwe-mediated apoptosis is activated to trim the developing tissue to match the correct size of the gradient. The polypeptide is Calcium channel flower (Drosophila virilis (Fruit fly)).